The chain runs to 314 residues: Protoheme IX farnesyltransferase 2 (314 aa).

9 helical membrane-spanning segments follow: residues 32–49 (VMSLVVFTAFVGLVAAPV), 54–76 (LLAVIAILSIAIGAGASGALNMW), 98–118 (IQPHEALSFGLVLSVLSVMTL), 120–140 (VLVNWLSATLLAFTIFFYAVV), 153–173 (IVIGGAAGAIPPVIGWAAVTG), 180–200 (IVLFLIIFLWTPPHFWALALF), 226–246 (IFAYALVLAPVGVAPWLLGYT), 249–269 (FYGVAAMLLGLGFVWYAWKVL), and 285–305 (FAYSLLYLFAIFAAYLADSVV).

It belongs to the UbiA prenyltransferase family. Protoheme IX farnesyltransferase subfamily.

It localises to the cell inner membrane. The enzyme catalyses heme b + (2E,6E)-farnesyl diphosphate + H2O = Fe(II)-heme o + diphosphate. The protein operates within porphyrin-containing compound metabolism; heme O biosynthesis; heme O from protoheme: step 1/1. In terms of biological role, converts heme B (protoheme IX) to heme O by substitution of the vinyl group on carbon 2 of heme B porphyrin ring with a hydroxyethyl farnesyl side group. This chain is Protoheme IX farnesyltransferase 2, found in Mesorhizobium japonicum (strain LMG 29417 / CECT 9101 / MAFF 303099) (Mesorhizobium loti (strain MAFF 303099)).